The primary structure comprises 662 residues: F-box/WD repeat-containing protein pof10 (662 aa).

Residues 1–16 are compositionally biased toward polar residues; sequence MKSEPTSLDFTSSNLR. The tract at residues 1 to 27 is disordered; the sequence is MKSEPTSLDFTSSNLRRMNRDHSSNNT. Residues 28-74 enclose the F-box domain; sequence NRTVLNLPKEILIIIFSFLDPRSLLSAQCTCKYWKKLLSDDLSWRTA. WD repeat units lie at residues 215-260, 263-302, and 429-468; these read SHAD…SLQS, FRSS…GYAR, and TAYS…FLKK. The UIM 1 domain maps to 581–600; sequence SEEEIIAYVTMLSQEEEAKR. The interval 617–645 is disordered; the sequence is ENDEQATSSLNALSSNHEPPQEQANVAEL. Positions 621-640 are enriched in polar residues; that stretch reads QATSSLNALSSNHEPPQEQA. The UIM 2 domain occupies 646–662; it reads NEQEQIELAMRLSLMEM.

Part of a SCF (SKP1-cullin-F-box) protein ligase complex. Interacts with skp1.

The protein resides in the cytoplasm. Functionally, probably recognizes and binds to some phosphorylated proteins and promotes their ubiquitination and degradation. This chain is F-box/WD repeat-containing protein pof10 (pof10), found in Schizosaccharomyces pombe (strain 972 / ATCC 24843) (Fission yeast).